A 505-amino-acid chain; its full sequence is Facilitated trehalose transporter Tret1 (505 aa).

Over 1-46 (MEMEIKDENLRNSVPFVRQLSTDSVKTKTEYDNEDGTPYKSTTQKL) the chain is Cytoplasmic. The chain crosses the membrane as a helical span at residues 47 to 67 (FLWTQLLAAFAVSVGSMNVGF). The Extracellular segment spans residues 68–91 (SSGYTSPAVLTMNITLDITKEEIT). Asn-80 is a glycosylation site (N-linked (GlcNAc...) asparagine). Residues 92–112 (WVGGLMPLAALVGGIVGGPLI) form a helical membrane-spanning segment. At 113 to 124 (EYLGRKKTIMGT) the chain is on the cytoplasmic side. The chain crosses the membrane as a helical span at residues 125-145 (AVPFTIGWMLIANAINVVMVF). Residues 146–149 (AGRV) lie on the Extracellular side of the membrane. The helical transmembrane segment at 150-170 (ICGVCVGIVSLAFPVYIGETI) threads the bilayer. The Cytoplasmic portion of the chain corresponds to 171-175 (QPEVR). Residues 176 to 196 (GALGLLPTAFGNTGILLAFLV) traverse the membrane as a helical segment. The Extracellular segment spans residues 197–201 (GSYLD). Residues 202-222 (WSNLAFFGAAIPVPFFLLMIL) form a helical membrane-spanning segment. Topologically, residues 223–286 (TPETPRWYVS…QLFSKRYLPA (64 aa)) are cytoplasmic. A helical transmembrane segment spans residues 287–307 (VMISLGLMLFQQLTGINAVIF). Over 308-323 (YAASIFQMSGSSVDEN) the chain is Extracellular. The helical transmembrane segment at 324-344 (LASIIIGVVNFISTFIATMLI) threads the bilayer. Residues 345-350 (DRLGRK) lie on the Cytoplasmic side of the membrane. Residues 351-371 (VLLYISSVAMITTLLALGAYF) traverse the membrane as a helical segment. Over 372-390 (YLKQNHIDVTAYGWLPLAC) the chain is Extracellular. A helical transmembrane segment spans residues 391 to 411 (LVIYVLGFSIGFGPIPWLMLG). Residues 412 to 419 (EILPSKIR) lie on the Cytoplasmic side of the membrane. The chain crosses the membrane as a helical span at residues 420-437 (GTAASLATGFNWTCTFIV). The Extracellular portion of the chain corresponds to 438–451 (TKTFQNIIDAIYMH). A helical transmembrane segment spans residues 452–472 (GTLWLFAVICIGGLLFVIFFV). At 473–505 (PETKGKSLEEIEMKLTSGSRRVRNISKQPENIC) the chain is on the cytoplasmic side.

This sequence belongs to the major facilitator superfamily. Sugar transporter (TC 2.A.1.1) family. Trehalose transporter subfamily. Expressed in many larval tissues at a low level, moderate levels of expression are seen in testis and head and highest expression in muscle.

Its subcellular location is the cell membrane. In terms of biological role, high-capacity facilitative transporter for trehalose. Does not transport maltose, sucrose or lactose. Mediates the bidirectional transfer of trehalose. Responsible for the transport of trehalose synthesized in the fat body and the incorporation of trehalose into other tissues that require a carbon source, thereby regulating trehalose levels in the hemolymph. The chain is Facilitated trehalose transporter Tret1 from Bombyx mori (Silk moth).